The primary structure comprises 136 residues: Cytidine deaminase (136 aa).

In terms of domain architecture, CMP/dCMP-type deaminase spans 1–128 (MDVEKLIAES…KLLPGAFSKE (128 aa)). 42–44 (NIE) provides a ligand contact to substrate. Cys-53 is a Zn(2+) binding site. Residue Glu-55 is the Proton donor of the active site. Cys-86 and Cys-89 together coordinate Zn(2+).

It belongs to the cytidine and deoxycytidylate deaminase family. The cofactor is Zn(2+).

The enzyme catalyses cytidine + H2O + H(+) = uridine + NH4(+). It catalyses the reaction 2'-deoxycytidine + H2O + H(+) = 2'-deoxyuridine + NH4(+). This enzyme scavenges exogenous and endogenous cytidine and 2'-deoxycytidine for UMP synthesis. This Sporosarcina psychrophila (Bacillus psychrophilus) protein is Cytidine deaminase (cdd).